The primary structure comprises 184 residues: Calmodulin-related protein (184 aa).

EF-hand domains are found at residues 8-43 (DQIS…LGQN), 44-79 (PTEA…KMKD), 81-116 (DSEE…LGEK), and 117-152 (LTDE…NRRR). D21, D23, D25, C27, E32, D57, D59, N61, T63, E68, D94, D96, N98, and E105 together coordinate Ca(2+). K116 bears the N6,N6,N6-trimethyllysine mark. Residues D130, D132, D134, Q136, and E141 each contribute to the Ca(2+) site. Residues 156-184 (EESKRSVNSNISRSNNGRKVRKRDRCTIL) form a disordered region. The span at 161 to 170 (SVNSNISRSN) shows a compositional bias: low complexity. The segment covering 171-184 (NGRKVRKRDRCTIL) has biased composition (basic residues).

It belongs to the calmodulin family.

Functionally, calmodulin mediates the control of a large number of enzymes, ion channels and other proteins by Ca(2+). Among the enzymes to be stimulated by the calmodulin-Ca(2+) complex are a number of protein kinases and phosphatases. The polypeptide is Calmodulin-related protein (CAM53) (Petunia hybrida (Petunia)).